Here is a 733-residue protein sequence, read N- to C-terminus: MPALGCCVDAAVSPPPGYSFLWDSSLPAPEIFPSGVPPSTNTAVATTTTTHWSPAHSSALYSIDGWGAPYFTVNSSGDISVKPHGTDTLPHQEIDLLKVVKKASDPKNLGGLGLQFPLVVRFPDILKNRLESLQSVFDYAVQSQGYEAHYQGVYPVKCNQDRFVVEDIVKFGSGFRFGLEAGSKPELLLAMSCLCKGSHEGLLVCNGFKDAEYISLALVARKLMLNTVIVLEQEEELDLVIDISKKMAVRPVIGLRAKLRTKHSGHFGSTSGEKGKFGLTTTQIVRVVKKLEESGMLDCLQLLHFHIGSQIPSTALLADGVGEAAQIYCELVRLGAGMKYIDCGGGLGIDYDGTKSCDSDCSVGYGLQEYASTVVQAVRFVCDRKNVKHPVICSESGRAIVSHHSVLIFEAVSSTTTRSQELSSVDLQSFVEKLNDDARADYRNLSAAAIRGEYDTCVLYADQLKQRCVEQFKDGDLDIEQLAAVDGICDFVSKAIGASDPVRTYHVNLSIFTSVPDFWAIDQLFPIVPIHKLDERPVVRGILSDLTCDSDGKIDKFIGGESSLPLHELGSNGGGGGDGGKYYLGMFLGGAYEEALGGLHNLFGGPSVLRVSQSDSPHSFAVTCAVPGPSCADVLRAMQHEPELMFETLKHRAEEFVHNDDEQEEDKGLAFASLASSLAQSFNNMPYLVTNSSCCLTAAANNGGYYYCNDENIVGVGAESAAAEEELWPYCVA.

The transit peptide at 1–44 (MPALGCCVDAAVSPPPGYSFLWDSSLPAPEIFPSGVPPSTNTAV) directs the protein to the chloroplast. N6-(pyridoxal phosphate)lysine is present on K157. Residues S309, G346, and 395-398 (ESGR) contribute to the pyridoxal 5'-phosphate site. 460-461 (YA) provides a ligand contact to substrate. C548 functions as the Proton donor; shared with dimeric partner in the catalytic mechanism. D549 contributes to the substrate binding site. Y592 provides a ligand contact to pyridoxal 5'-phosphate.

This sequence belongs to the Orn/Lys/Arg decarboxylase class-II family. SpeA subfamily. As to quaternary structure, interacts, via its C-terminal internal region, with the tobacco mosaic virus (TMV) replicase helicase region. Requires Mg(2+) as cofactor. It depends on pyridoxal 5'-phosphate as a cofactor.

It is found in the plastid. It localises to the chloroplast. It carries out the reaction L-arginine + H(+) = agmatine + CO2. The protein operates within alkaloid biosynthesis; nicotine biosynthesis. It participates in amine and polyamine biosynthesis; agmatine biosynthesis; agmatine from L-arginine: step 1/1. Involved in the biosynthesis of pyridine alkaloid natural products, leading mainly to the production of anabasine, anatabine, nicotine and nornicotine, effective deterrents against herbivores with antiparasitic and pesticide properties (neurotoxins); nornicotine serves as the precursor in the synthesis of the carcinogen compound N'-nitrosonornicotine (NNN). Required for the biosynthesis of putrescine. Catalyzes the first step of polyamine (PA) biosynthesis to produce putrescine from arginine. The polypeptide is Arginine decarboxylase 1A, chloroplastic (Nicotiana tabacum (Common tobacco)).